The sequence spans 212 residues: Acyl-homoserine-lactone synthase (212 aa).

It belongs to the autoinducer synthase family.

The catalysed reaction is a fatty acyl-[ACP] + S-adenosyl-L-methionine = an N-acyl-L-homoserine lactone + S-methyl-5'-thioadenosine + holo-[ACP] + H(+). Its function is as follows. Required for the synthesis of OHHL (N-(3-oxohexanoyl)-L-homoserine lactone), an autoinducer molecule which binds to ExpR and thus acts in virulence (soft rot disease) through the activation of genes for plant tissue macerating enzymes. The chain is Acyl-homoserine-lactone synthase (expI) from Dickeya dadantii (strain 3937) (Erwinia chrysanthemi (strain 3937)).